The sequence spans 236 residues: 27 kDa hemolymph protein (236 aa).

The first 17 residues, 1-17 (MMWKLIIVTILAVGVLC), serve as a signal peptide directing secretion.

As to quaternary structure, monomer. Hemolymph.

Its subcellular location is the secreted. The polypeptide is 27 kDa hemolymph protein (Galleria mellonella (Greater wax moth)).